The following is a 340-amino-acid chain: Latency-related protein 1 (340 aa).

Disordered stretches follow at residues 13 to 96 and 254 to 340; these read AALW…PNRQ and RLPG…PPRP. Repeat copies occupy residues 27–43 and 59–75. The tract at residues 27–75 is 2 X 17 AA repeats; sequence PTPTHPHSHAPPLPRTPTPSHPHSRAPPLPRAPTPTHPHSHAPPLPRTP. Residues 35–73 are compositionally biased toward pro residues; the sequence is HAPPLPRTPTPSHPHSRAPPLPRAPTPTHPHSHAPPLPR. Residues 287-307 show a composition bias toward gly residues; the sequence is ARGGGSGGGRGPGGGRGGPRG. Over residues 308–326 the composition is skewed to basic residues; it reads SRGRGGRGRGGRGGGRRGR.

The chain is Latency-related protein 1 from Human herpesvirus 1 (strain F) (HHV-1).